A 431-amino-acid chain; its full sequence is Glucose-1-phosphate adenylyltransferase (431 aa).

Alpha-D-glucose 1-phosphate-binding positions include Tyr109, Gly175, 190-191 (EK), and Ser208.

Belongs to the bacterial/plant glucose-1-phosphate adenylyltransferase family. In terms of assembly, homotetramer.

It carries out the reaction alpha-D-glucose 1-phosphate + ATP + H(+) = ADP-alpha-D-glucose + diphosphate. Its pathway is glycan biosynthesis; glycogen biosynthesis. Functionally, involved in the biosynthesis of ADP-glucose, a building block required for the elongation reactions to produce glycogen. Catalyzes the reaction between ATP and alpha-D-glucose 1-phosphate (G1P) to produce pyrophosphate and ADP-Glc. In Alteromonas mediterranea (strain DSM 17117 / CIP 110805 / LMG 28347 / Deep ecotype), this protein is Glucose-1-phosphate adenylyltransferase.